Consider the following 97-residue polypeptide: YcgL domain-containing protein Maqu_1609 (97 aa).

Residues 5 to 89 enclose the YcgL domain; the sequence is EFVSVFRSSK…EQDTYIVDFK (85 aa).

This Marinobacter nauticus (strain ATCC 700491 / DSM 11845 / VT8) (Marinobacter aquaeolei) protein is YcgL domain-containing protein Maqu_1609.